The following is an 84-amino-acid chain: Gomesin (84 aa).

Residues 1–23 (MNRTRLFACLLLAVLILVHESNA) form the signal peptide. Gln24 carries the pyrrolidone carboxylic acid modification. Disulfide bonds link Cys25/Cys38 and Cys29/Cys34. Arg41 is modified (arginine amide). A propeptide spanning residues 42-84 (GKRSLDETNVGTSDVEKRAFDDSNVPSLVEERELEDEGSFIFD) is cleaved from the precursor.

As to expression, in hemocytes only, but not in all hemocytes observed.

It localises to the secreted. Its function is as follows. Active against several Gram-positive bacteria such as Bacillus spp, Staphylococcus spp and E.faecalis, several Gram-negative bacteria such as E.coli, K.pneumoniae, P.aeruginosa and Salmonella spp, filamentous fungi such as N.crassa, T.viridae and yeasts such as C.albicans. It is active against the parasite L.amazonensis as well. It shows hemolytic activity. This is Gomesin from Acanthoscurria gomesiana (Tarantula spider).